The sequence spans 562 residues: Solute carrier family 40 member 1 (562 aa).

Topologically, residues 1-20 are cytoplasmic; that stretch reads MDSPASKKPRCERFREFFKS. A helical transmembrane segment spans residues 21 to 50; the sequence is AKFLIYVGHALSTWGDRMWNFAVAVFLVEL. Position 36 (D36) interacts with Fe cation. Over 51–54 the chain is Extracellular; sequence YGNS. Residues 55–81 form a helical membrane-spanning segment; that stretch reads LLLTAVYGLVVAGSVLLLGAIIGDWVD. At 82–84 the chain is on the cytoplasmic side; it reads KNP. The helical transmembrane segment at 85 to 115 threads the bilayer; sequence RLKVAQTSLVVQNSAVILCGALLMAVFQFKQ. The Extracellular segment spans residues 116–123; it reads QLSSMYDG. A helical transmembrane segment spans residues 124-159; sequence WLLTTCYIMVISIANIANLASTAMSITIQRDWVVVV. The Cytoplasmic portion of the chain corresponds to 160-161; that stretch reads AG. Residues 162–192 traverse the membrane as a helical segment; the sequence is DDRSKLADMNATVRIIDQLTNILAPMLVGQI. Topologically, residues 193-199 are extracellular; it reads MAFGSHF. Residues 200–226 traverse the membrane as a helical segment; that stretch reads IGCGFISGWNLFSMCLEYFLLWKVYQK. Over 227-300 the chain is Cytoplasmic; sequence TPALAFKAGQ…DGWVAYYNQS (74 aa). Residues 301 to 327 form a helical membrane-spanning segment; sequence IFFAGMSLAFLYMTVLGFDCITTGYAY. C320 is a Fe cation binding site. Over 328–332 the chain is Extracellular; it reads TQGLN. The helical transmembrane segment at 333–360 threads the bilayer; it reads GSVLSLLMGASAVSGICGTVAFTWIRKK. Topologically, residues 361-362 are cytoplasmic; it reads CG. Residues 363–385 form a helical membrane-spanning segment; it reads LIRTGFIAGVTQLSCLTLCVASV. Residues 386–444 lie on the Extracellular side of the membrane; the sequence is FAPGSPFDLSVSPFEEVLRHLFGDSGSLRESPTFIPTTEPPIQANVTVFEEAPPVESYM. The chain crosses the membrane as a helical span at residues 445–474; that stretch reads SVGLLFAGVIAARVGLWSFDLTVTQLIQEN. Over 475–479 the chain is Cytoplasmic; the sequence is VIESE. A helical membrane pass occupies residues 480 to 504; the sequence is RGVINGVQNSMNYLLDLLHFIMVIL. H498 contributes to the Fe cation binding site. The Extracellular segment spans residues 505-507; that stretch reads APN. The chain crosses the membrane as a helical span at residues 508–533; sequence PEAFGLLVIISVSFVAMGHMMYFRFA. Topologically, residues 534–562 are cytoplasmic; it reads YKSLGSRLFLFCSPEQKPDPNIPSLPNSV.

The protein belongs to the ferroportin (FP) (TC 2.A.100) family. SLC40A subfamily. Expressed in the yolk sac and placenta.

The protein resides in the cell membrane. The protein localises to the basolateral cell membrane. The enzyme catalyses Fe(2+)(in) = Fe(2+)(out). Transports Fe(2+) from the inside of a cell to the outside of the cell, playing a key role for maintaining systemic iron homeostasis. May be involved in transfer of Fe(2+) between maternal and fetal circulation. The chain is Solute carrier family 40 member 1 (slc40a1) from Danio rerio (Zebrafish).